A 119-amino-acid chain; its full sequence is Beta-2-microglobulin (119 aa).

The N-terminal stretch at 1 to 20 (MARSVVVALLVLLSLSGLEA) is a signal peptide. An Ig-like C1-type domain is found at 25–114 (PKIQVYSRHP…VTFSTPKTVK (90 aa)). Cys45 and Cys100 are joined by a disulfide.

The protein belongs to the beta-2-microglobulin family. Heterodimer of an alpha chain and a beta chain. Beta-2-microglobulin is the beta-chain of major histocompatibility complex class I molecules.

It localises to the secreted. Functionally, component of the class I major histocompatibility complex (MHC). Involved in the presentation of peptide antigens to the immune system. In Ateles paniscus (Black spider monkey), this protein is Beta-2-microglobulin (B2M).